The chain runs to 482 residues: Abscisic acid 8'-hydroxylase 2 (482 aa).

The helical transmembrane segment at 20–40 (PALITLTIVVVVVVLLFKWWL) threads the bilayer. C431 is a heme binding site.

It belongs to the cytochrome P450 family. Heme is required as a cofactor. Mainly expressed in dry seeds. Lower expression in rosette leaves, flowers, siliques and stems. Not expressed in roots. Expressed in both endosperm and vascular tissues of embryo during the seed development and in cortex and endodermis in germinating embryo.

The protein localises to the membrane. It catalyses the reaction 2-cis-(+)-abscisate + reduced [NADPH--hemoprotein reductase] + O2 = (+)-8'-hydroxyabscisate + oxidized [NADPH--hemoprotein reductase] + H2O + H(+). It functions in the pathway plant hormone degradation; abscisic acid degradation. In terms of biological role, involved in the oxidative degradation of abscisic acid, but not in the isomerization of the produced 8'-hydroxyabscisic acid (8'-OH-ABA) to (-)-phaseic acid (PA). Involved in the control of seed dormancy and germination. This is Abscisic acid 8'-hydroxylase 2 (CYP707A2) from Arabidopsis thaliana (Mouse-ear cress).